The sequence spans 265 residues: ClpXP adapter protein SpxH (265 aa).

It belongs to the SpxH family. Interacts with Spx.

Its subcellular location is the cytoplasm. Its function is as follows. Adapter protein required for efficient degradation of Spx by ClpXP under non-stress conditions. Interaction with Spx stabilizes Spx and exposes the C-terminus of Spx for recognition and proteolysis by ClpXP. The chain is ClpXP adapter protein SpxH from Staphylococcus haemolyticus (strain JCSC1435).